Consider the following 65-residue polypeptide: Large ribosomal subunit protein bL35 (65 aa).

Residues 1-23 are disordered; that stretch reads MPKMKSNRGAAKRFKRTGSGKFK. The span at 10–23 shows a compositional bias: basic residues; that stretch reads AAKRFKRTGSGKFK.

The protein belongs to the bacterial ribosomal protein bL35 family.

The sequence is that of Large ribosomal subunit protein bL35 from Acidithiobacillus ferrooxidans (strain ATCC 53993 / BNL-5-31) (Leptospirillum ferrooxidans (ATCC 53993)).